The sequence spans 287 residues: 4-hydroxybenzoate octaprenyltransferase (287 aa).

Transmembrane regions (helical) follow at residues 21 to 41 (VGIF…AKGA), 44 to 64 (FKIA…GCIV), 91 to 111 (VTEA…LVLL), 112 to 132 (LNRL…VYPF), 139 to 159 (LPQL…FAAT), 160 to 180 (VGHV…WPIV), 211 to 231 (LMIG…GWYL), 235 to 255 (YWFY…QFLI), and 263 to 283 (CFAA…GILL).

Belongs to the UbiA prenyltransferase family. Mg(2+) is required as a cofactor.

The protein localises to the cell inner membrane. The catalysed reaction is all-trans-octaprenyl diphosphate + 4-hydroxybenzoate = 4-hydroxy-3-(all-trans-octaprenyl)benzoate + diphosphate. It functions in the pathway cofactor biosynthesis; ubiquinone biosynthesis. In terms of biological role, catalyzes the prenylation of para-hydroxybenzoate (PHB) with an all-trans polyprenyl group. Mediates the second step in the final reaction sequence of ubiquinone-8 (UQ-8) biosynthesis, which is the condensation of the polyisoprenoid side chain with PHB, generating the first membrane-bound Q intermediate 3-octaprenyl-4-hydroxybenzoate. The chain is 4-hydroxybenzoate octaprenyltransferase from Coxiella burnetii (strain RSA 331 / Henzerling II).